A 410-amino-acid polypeptide reads, in one-letter code: Multifunctional CCA protein (410 aa).

Residues Gly8 and Arg11 each coordinate ATP. CTP-binding residues include Gly8 and Arg11. Residues Asp21 and Asp23 each contribute to the Mg(2+) site. ATP contacts are provided by Arg91, Arg143, and Arg146. Arg91, Arg143, and Arg146 together coordinate CTP. The 102-residue stretch at 232–333 (TGVHVMMVVD…VRLLERSDAI (102 aa)) folds into the HD domain.

The protein belongs to the tRNA nucleotidyltransferase/poly(A) polymerase family. Bacterial CCA-adding enzyme type 1 subfamily. In terms of assembly, monomer. Can also form homodimers and oligomers. Requires Mg(2+) as cofactor. Ni(2+) serves as cofactor.

The enzyme catalyses a tRNA precursor + 2 CTP + ATP = a tRNA with a 3' CCA end + 3 diphosphate. It carries out the reaction a tRNA with a 3' CCA end + 2 CTP + ATP = a tRNA with a 3' CCACCA end + 3 diphosphate. Catalyzes the addition and repair of the essential 3'-terminal CCA sequence in tRNAs without using a nucleic acid template. Adds these three nucleotides in the order of C, C, and A to the tRNA nucleotide-73, using CTP and ATP as substrates and producing inorganic pyrophosphate. tRNA 3'-terminal CCA addition is required both for tRNA processing and repair. Also involved in tRNA surveillance by mediating tandem CCA addition to generate a CCACCA at the 3' terminus of unstable tRNAs. While stable tRNAs receive only 3'-terminal CCA, unstable tRNAs are marked with CCACCA and rapidly degraded. This is Multifunctional CCA protein from Paraburkholderia phytofirmans (strain DSM 17436 / LMG 22146 / PsJN) (Burkholderia phytofirmans).